A 144-amino-acid chain; its full sequence is FK506-binding protein 2 (144 aa).

The first 20 residues, 1–20 (MARIIVLIVAFMALIAGVFA), serve as a signal peptide directing secretion. One can recognise a PPIase FKBP-type domain in the interval 48 to 136 (GDTVSVHYTG…IFTTELVSID (89 aa)). The Prevents secretion from ER motif lies at 141-144 (RDEL).

Belongs to the FKBP-type PPIase family. FKBP2 subfamily.

It is found in the endoplasmic reticulum. It carries out the reaction [protein]-peptidylproline (omega=180) = [protein]-peptidylproline (omega=0). Its activity is regulated as follows. Inhibited by both FK506 and rapamycin. In terms of biological role, PPIases accelerate the folding of proteins. It catalyzes the cis-trans isomerization of proline imidic peptide bonds in oligopeptides. The chain is FK506-binding protein 2 (FPR2) from Yarrowia lipolytica (strain CLIB 122 / E 150) (Yeast).